The following is a 285-amino-acid chain: Steroidogenic acute regulatory protein (285 aa).

Positions Thr67–Asn280 constitute an START domain.

As to quaternary structure, may interact with TSPO.

The protein localises to the mitochondrion. The catalysed reaction is cholesterol(in) = cholesterol(out). It functions in the pathway steroid metabolism; cholesterol metabolism. Functionally, plays a key role in steroid hormone synthesis by enhancing the metabolism of cholesterol into pregnenolone. Mediates the transfer of cholesterol from the outer mitochondrial membrane to the inner mitochondrial membrane where it is cleaved to pregnenolone. The chain is Steroidogenic acute regulatory protein (star) from Xenopus laevis (African clawed frog).